The chain runs to 243 residues: Ubiquinone biosynthesis O-methyltransferase (243 aa).

Positions 44, 64, 85, and 129 each coordinate S-adenosyl-L-methionine.

This sequence belongs to the methyltransferase superfamily. UbiG/COQ3 family.

The enzyme catalyses a 3-demethylubiquinol + S-adenosyl-L-methionine = a ubiquinol + S-adenosyl-L-homocysteine + H(+). The catalysed reaction is a 3-(all-trans-polyprenyl)benzene-1,2-diol + S-adenosyl-L-methionine = a 2-methoxy-6-(all-trans-polyprenyl)phenol + S-adenosyl-L-homocysteine + H(+). It functions in the pathway cofactor biosynthesis; ubiquinone biosynthesis. O-methyltransferase that catalyzes the 2 O-methylation steps in the ubiquinone biosynthetic pathway. This is Ubiquinone biosynthesis O-methyltransferase from Cronobacter sakazakii (strain ATCC BAA-894) (Enterobacter sakazakii).